The chain runs to 366 residues: Galactoside alpha-(1,2)-fucosyltransferase 1 (366 aa).

The Cytoplasmic portion of the chain corresponds to 1 to 8 (MWPLSHRH). The chain crosses the membrane as a helical; Signal-anchor for type II membrane protein span at residues 9–25 (LCLAFLLVCVLSAISFF). At 26–366 (LHVHQDSFRH…LSPLWTLAEP (341 aa)) the chain is on the lumenal side. 3 N-linked (GlcNAc...) asparagine glycosylation sites follow: Asn-66, Asn-302, and Asn-328.

The protein belongs to the glycosyltransferase 11 family.

It localises to the golgi apparatus. It is found in the golgi stack membrane. The catalysed reaction is a beta-D-galactosyl-(1-&gt;4)-N-acetyl-beta-D-glucosaminyl derivative + GDP-beta-L-fucose = an alpha-L-Fuc-(1-&gt;2)-beta-D-Gal-(1-&gt;4)-beta-D-GlcNAc derivative + GDP + H(+). It catalyses the reaction a ganglioside GA1 + GDP-beta-L-fucose = a ganglioside Fuc-GA1 + GDP + H(+). It carries out the reaction a beta-D-Gal-(1-&gt;3)-beta-D-GlcNAc-(1-&gt;3)-beta-D-Gal-(1-&gt;4)-beta-D-Glc-(1&lt;-&gt;1')-Cer(d18:1(4E)) + GDP-beta-L-fucose = alpha-L-fucosyl-(1-&gt;2)- beta-D-galactosyl-(1-&gt;3)-N-acetyl-beta-D-glucosaminyl-(1-&gt;3)-beta-D-galactosyl-(1-&gt;4)-beta-D-glucosyl-(1&lt;-&gt;1')-N-acylsphing-4-enine + GDP + H(+). The enzyme catalyses a neolactoside nLc4Cer(d18:1(4E)) + GDP-beta-L-fucose = a neolactoside IV(2)-alpha-Fuc-nLc4Cer(d18:1(4E)) + GDP + H(+). The catalysed reaction is a ganglioside GM1 + GDP-beta-L-fucose = a ganglioside Fuc-GM1 + GDP + H(+). It catalyses the reaction beta-D-galactosyl-(1-&gt;3)-N-acetyl-D-galactosamine + GDP-beta-L-fucose = alpha-L-fucosyl-(1-&gt;2)-beta-D-galactosyl-(1-&gt;3)-N-acetyl-D-galactosamine + GDP + H(+). Its pathway is protein modification; protein glycosylation. Its function is as follows. Catalyzes the transfer of L-fucose, from a guanosine diphosphate-beta-L-fucose, to the terminal galactose residue of glycoconjugates through an alpha(1,2) linkage leading to H antigen synthesis that is an intermediate substrate in the synthesis of ABO blood group antigens. H antigen is essential for maturation of the glomerular layer of the main olfactory bulb, in cell migration and early cell-cell contacts during tumor associated angiogenesis. Preferentially fucosylates soluble lactose and to a lesser extent fucosylates glycolipids gangliosides GA1 and GM1a. The chain is Galactoside alpha-(1,2)-fucosyltransferase 1 from Alouatta caraya (Black howler monkey).